The following is a 494-amino-acid chain: Probable 26S proteasome non-ATPase regulatory subunit 3 (494 aa).

The region spanning 247-426 (ARFLYYLGRI…NFMRSKESTD (180 aa)) is the PCI domain. The segment at 458-494 (PPKSYGKDLESAEERREREQQDLELAKEMAEDDEDGF) is disordered. The segment covering 462–486 (YGKDLESAEERREREQQDLELAKEM) has biased composition (basic and acidic residues).

The protein belongs to the proteasome subunit S3 family. In terms of assembly, the 26S proteasome is composed of a core protease, known as the 20S proteasome, capped at one or both ends by the 19S regulatory complex (RC). The RC is composed of at least 18 different subunits in two subcomplexes, the base and the lid, which form the portions proximal and distal to the 20S proteolytic core, respectively. Blood (crystal) cells and cuticle.

In terms of biological role, acts as a regulatory subunit of the 26 proteasome which is involved in the ATP-dependent degradation of ubiquitinated proteins. This chain is Probable 26S proteasome non-ATPase regulatory subunit 3 (Rpn3), found in Drosophila melanogaster (Fruit fly).